The primary structure comprises 413 residues: Serine/threonine transporter SstT (413 aa).

Helical transmembrane passes span 22–42 (GLLL…VLGF), 61–81 (AVAP…KQLG), 89–109 (IVVL…LFSF), 148–168 (ALFN…GIAL), 189–209 (IVHF…AETL), 224–244 (LVVL…ILVF), 305–325 (MAGA…TLGI), 337–357 (VVAS…LLLI), and 363–383 (LFGI…VIGV).

It belongs to the dicarboxylate/amino acid:cation symporter (DAACS) (TC 2.A.23) family.

Its subcellular location is the cell inner membrane. The catalysed reaction is L-serine(in) + Na(+)(in) = L-serine(out) + Na(+)(out). It carries out the reaction L-threonine(in) + Na(+)(in) = L-threonine(out) + Na(+)(out). Functionally, involved in the import of serine and threonine into the cell, with the concomitant import of sodium (symport system). The polypeptide is Serine/threonine transporter SstT (Histophilus somni (strain 129Pt) (Haemophilus somnus)).